Reading from the N-terminus, the 383-residue chain is Microtubule-associated protein tau (383 aa).

The span at Met-1–Glu-27 shows a compositional bias: basic and acidic residues. The interval Met-1–Val-198 is disordered. Ala-2 carries the post-translational modification N-acetylalanine. Phosphotyrosine occurs at positions 18 and 29. Residue Lys-44 forms a Glycyl lysine isopeptide (Lys-Gly) (interchain with G-Cter in ubiquitin) linkage. Residue Thr-53 is modified to Phosphothreonine. Residues Lys-72–Thr-91 are compositionally biased toward basic and acidic residues. Position 95 is a phosphothreonine (Thr-95). The residue at position 97 (Arg-97) is an Omega-N-methylarginine. The residue at position 105 (Lys-105) is an N6,N6-dimethyllysine; alternate. Lys-105 bears the N6-acetyllysine; alternate mark. Phosphothreonine occurs at positions 111, 117, and 123. Positions Lys-116–Gly-128 are enriched in pro residues. A phosphoserine mark is found at Ser-127, Ser-133, and Ser-137. The span at Glu-129–Ser-156 shows a compositional bias: low complexity. Position 139 is a phosphotyrosine (Tyr-139). Phosphoserine occurs at positions 140, 141, and 144. Residues Thr-147 and Thr-154 each carry the phosphothreonine modification. Ser-156 bears the Phosphoserine mark. Thr-159 bears the Phosphothreonine mark. Lys-167 bears the N6-acetyllysine mark. The residue at position 173 (Thr-173) is a Phosphothreonine. Phosphoserine occurs at positions 177 and 179. Tau/MAP repeat units lie at residues Gln-186–Lys-216, Val-217–Ser-247, Val-248–Gln-278, and Val-279–Asn-310. Lys-196 participates in a covalent cross-link: Glycyl lysine isopeptide (Lys-Gly) (interchain with G-Cter in ubiquitin). At Lys-201 the chain carries N6-acetyllysine; alternate. At Lys-201 the chain carries N6-methyllysine; alternate. Lys-201 is covalently cross-linked (Glycyl lysine isopeptide (Lys-Gly) (interchain with G-Cter in ubiquitin); alternate). Phosphoserine is present on Ser-204. Lys-209 is covalently cross-linked (Glycyl lysine isopeptide (Lys-Gly) (interchain with G-Cter in ubiquitin)). At Lys-223 the chain carries N6-acetyllysine; alternate. Lys-223 is covalently cross-linked (Glycyl lysine isopeptide (Lys-Gly) (interchain with G-Cter in ubiquitin); alternate). 2 positions are modified to phosphoserine: Ser-227 and Ser-231. Lys-232 bears the N6-acetyllysine mark. Cys-233 and Cys-264 are disulfide-bonded. Ser-235 is modified (phosphoserine). Lys-240 carries the post-translational modification N6-acetyllysine; alternate. A Glycyl lysine isopeptide (Lys-Gly) (interchain with G-Cter in ubiquitin); alternate cross-link involves residue Lys-240. Ser-247 is subject to Phosphoserine. Lys-253 carries the N6,N6-dimethyllysine; alternate modification. Residues Lys-253, Lys-259, and Lys-263 each carry the N6-acetyllysine; alternate modification. Glycyl lysine isopeptide (Lys-Gly) (interchain with G-Cter in ubiquitin); alternate cross-links involve residues Lys-253, Lys-259, and Lys-263. Ser-266 is subject to Phosphoserine. N6-acetyllysine; alternate is present on residues Lys-273, Lys-285, and Lys-289. Glycyl lysine isopeptide (Lys-Gly) (interchain with G-Cter in ubiquitin); alternate cross-links involve residues Lys-273, Lys-285, and Lys-289. Omega-N-methylarginine is present on Arg-291. Ser-294 is modified (phosphoserine). Residue Lys-295 forms a Glycyl lysine isopeptide (Lys-Gly) (interchain with G-Cter in ubiquitin) linkage. The residue at position 298 (Ser-298) is a Phosphoserine. Lys-311 is modified (N6-acetyllysine; alternate). A Glycyl lysine isopeptide (Lys-Gly) (interchain with G-Cter in ubiquitin); alternate cross-link involves residue Lys-311. Lys-317 participates in a covalent cross-link: Glycyl lysine isopeptide (Lys-Gly) (interchain with G-Cter in ubiquitin). An N6-acetyllysine; alternate modification is found at Lys-327. Residue Lys-327 forms a Glycyl lysine isopeptide (Lys-Gly) (interchain with G-Cter in ubiquitin); alternate linkage. A Phosphotyrosine modification is found at Tyr-336. Phosphoserine is present on residues Ser-338 and Ser-342. Residues Val-340–Ile-359 form a disordered region. Polar residues predominate over residues Gly-343–Ser-358. Phosphothreonine is present on Thr-345. Ser-346, Ser-351, Ser-358, and Ser-364 each carry phosphoserine. A Phosphothreonine modification is found at Thr-369.

In terms of assembly, interacts with MARK1, MARK2, MARK3 and MARK4. Interacts with SQSTM1 when polyubiquitinated. Interacts with PSMC2 through SQSTM1. Interacts with FKBP4. Binds to CSNK1D. Interacts with SGK1. Interacts with PIN1. Interacts with LRRK2. Interacts with LRP1, leading to endocytosis; this interaction is reduced in the presence of LRPAP1/RAP. Post-translationally, polyubiquitinated. Requires functional TRAF6 and may provoke SQSTM1-dependent degradation by the proteasome. In terms of processing, phosphorylation at various serine and threonine residues in S-P or T-P motifs by proline-directed protein kinases (PDPK1, CDK1, CDK5, GSK3, MAPK) (a few sites per protein in interphase, more in mitosis), and at serine residues in K-X-G-S motifs by MAP/microtubule affinity-regulating kinase (MARK1, MARK2, MARK3 or MARK4), causing detachment from microtubules, and their disassembly. Phosphorylation at Ser-204 by BRSK1 and BRSK2 in neurons affects ability to bind microtubules and plays a role in neuron polarization. Phosphorylated by PHK. Dephosphorylation at several serine and threonine residues by the serine/threonine phosphatase PPP5C. In terms of tissue distribution, expressed in neurons.

Its subcellular location is the cytoplasm. It localises to the cytosol. The protein localises to the cell membrane. It is found in the cytoskeleton. The protein resides in the cell projection. Its subcellular location is the axon. It localises to the dendrite. Functionally, promotes microtubule assembly and stability, and might be involved in the establishment and maintenance of neuronal polarity. The C-terminus binds axonal microtubules while the N-terminus binds neural plasma membrane components, suggesting that tau functions as a linker protein between both. Axonal polarity is predetermined by tau localization (in the neuronal cell) in the domain of the cell body defined by the centrosome. In Papio hamadryas (Hamadryas baboon), this protein is Microtubule-associated protein tau (MAPT).